Consider the following 49-residue polypeptide: DNA-directed RNA polymerase subunit Rpo12 (49 aa).

Zn(2+)-binding residues include C11, C27, and C30.

Belongs to the archaeal Rpo12/eukaryotic RPC10 RNA polymerase subunit family. As to quaternary structure, part of the RNA polymerase complex. Zn(2+) serves as cofactor.

The protein resides in the cytoplasm. It catalyses the reaction RNA(n) + a ribonucleoside 5'-triphosphate = RNA(n+1) + diphosphate. Its function is as follows. DNA-dependent RNA polymerase (RNAP) catalyzes the transcription of DNA into RNA using the four ribonucleoside triphosphates as substrates. The sequence is that of DNA-directed RNA polymerase subunit Rpo12 from Pyrococcus abyssi (strain GE5 / Orsay).